Reading from the N-terminus, the 272-residue chain is Phosphoglycolate phosphatase (272 aa).

Asp19 acts as the Nucleophile in catalysis. Mg(2+) contacts are provided by Asp19, Asp21, and Asp182.

It belongs to the HAD-like hydrolase superfamily. CbbY/CbbZ/Gph/YieH family. The cofactor is Mg(2+).

The catalysed reaction is 2-phosphoglycolate + H2O = glycolate + phosphate. It functions in the pathway organic acid metabolism; glycolate biosynthesis; glycolate from 2-phosphoglycolate: step 1/1. In terms of biological role, specifically catalyzes the dephosphorylation of 2-phosphoglycolate. Is involved in the dissimilation of the intracellular 2-phosphoglycolate formed during the DNA repair of 3'-phosphoglycolate ends, a major class of DNA lesions induced by oxidative stress. The protein is Phosphoglycolate phosphatase of Pseudomonas syringae pv. syringae (strain B728a).